The primary structure comprises 252 residues: Mitochondrial peculiar membrane protein 1 (252 aa).

Positions 230 to 252 (TTTTSKGSSPQVKHKVVSVDEDN) are disordered.

It is found in the mitochondrion membrane. The polypeptide is Mitochondrial peculiar membrane protein 1 (MPM1) (Saccharomyces cerevisiae (strain ATCC 204508 / S288c) (Baker's yeast)).